A 376-amino-acid chain; its full sequence is UPF0754 membrane protein Sca_1420 (376 aa).

2 consecutive transmembrane segments (helical) span residues 4–24 (FLVI…TNII) and 356–376 (LLGF…ALFV).

This sequence belongs to the UPF0754 family.

It is found in the cell membrane. The protein is UPF0754 membrane protein Sca_1420 of Staphylococcus carnosus (strain TM300).